We begin with the raw amino-acid sequence, 199 residues long: UPF0329 protein ECU01_0120/ECU01_1490/ECU08_0050 (199 aa).

Belongs to the UPF0329 family.

The protein is UPF0329 protein ECU01_0120/ECU01_1490/ECU08_0050 of Encephalitozoon cuniculi (strain GB-M1) (Microsporidian parasite).